We begin with the raw amino-acid sequence, 264 residues long: ECF RNA polymerase sigma factor BldN (264 aa).

The not required for transcription in vitro stretch occupies residues methionine 1–methionine 87. Residues arginine 64–aspartate 83 form a disordered region. The segment at leucine 105–arginine 172 is sigma-70 factor domain-2. The Polymerase core binding motif lies at aspartate 129–serine 132. The interval alanine 204–leucine 255 is sigma-70 factor domain-4.

It belongs to the sigma-70 factor family. ECF subfamily. In terms of processing, two forms of protein exist; a 35 kDa form in early growth and a 28 kDa form seen in later stages (at protein level). In liquid culture the larger form accumulates to higher level than on solid media. The shorter form results from processing just upstream of Met-87; the exact position is unknown. There are 4 possible start codons; mutation of the first prevents protein production while mutation of the other 3 (Val-44, Met-87 and Met-88) permits production of both forms. Introduction of stop codons between the first and second, or second and third possible start codons also prevents protein production, corroborating that the annotated start codon is the correct one.

Sigma factors are initiation factors that promote the attachment of RNA polymerase to specific initiation sites and are then released. Extracytoplasmic function (ECF) sigma factors are usually held in an inactive form by an anti-sigma factor until released. ECF sigma factor involved in aerial mycelium formation, required for translation from the bldMp1 promoter. Expressed as a preprotein; processing and accumulation of the mature protein starts as aerial mycelium formation and sporulation commence. Activates expression of about 17 genes, including those for rdlA and most of the chaplins (chpA to chpH); chaplin activation is indirect. The protein is ECF RNA polymerase sigma factor BldN of Streptomyces coelicolor (strain ATCC BAA-471 / A3(2) / M145).